Reading from the N-terminus, the 234-residue chain is 5'-methylthioadenosine/S-adenosylhomocysteine nucleosidase (234 aa).

The active-site Proton acceptor is the E12. Residues G78, I152, and 173–174 each bind substrate; that span reads ME. Catalysis depends on D197, which acts as the Proton donor.

Belongs to the PNP/UDP phosphorylase family. MtnN subfamily.

The enzyme catalyses S-adenosyl-L-homocysteine + H2O = S-(5-deoxy-D-ribos-5-yl)-L-homocysteine + adenine. The catalysed reaction is S-methyl-5'-thioadenosine + H2O = 5-(methylsulfanyl)-D-ribose + adenine. It carries out the reaction 5'-deoxyadenosine + H2O = 5-deoxy-D-ribose + adenine. It functions in the pathway amino-acid biosynthesis; L-methionine biosynthesis via salvage pathway; S-methyl-5-thio-alpha-D-ribose 1-phosphate from S-methyl-5'-thioadenosine (hydrolase route): step 1/2. Its function is as follows. Catalyzes the irreversible cleavage of the glycosidic bond in both 5'-methylthioadenosine (MTA) and S-adenosylhomocysteine (SAH/AdoHcy) to adenine and the corresponding thioribose, 5'-methylthioribose and S-ribosylhomocysteine, respectively. Also cleaves 5'-deoxyadenosine, a toxic by-product of radical S-adenosylmethionine (SAM) enzymes, into 5-deoxyribose and adenine. This Desulfotalea psychrophila (strain LSv54 / DSM 12343) protein is 5'-methylthioadenosine/S-adenosylhomocysteine nucleosidase.